A 485-amino-acid polypeptide reads, in one-letter code: MSQVNRRKVLFVTSELADLVKTGGLGDVSAALPRAMRHLHDVRVLIPGYPQVINSGNPIHIISQLGGHAALPPCKVGRMDMKDGLVIYVLICPELYEREGTPYADSNGRDWSDNHIRFARLGLAAAEFAAGEVKSQWCPELVHAHDWPAGLAPAYMRWRGQSTPSIFTVHNLAYQGTVSTASSRELGIPDSAITPEGMEFYGQLSFIKAGMAFASHITTVSATYAREITTPEFGCGLEGFLQSKANKGQLSGIPNGIDESWDAATDEHLICHFAPNEWTRKEINADYVRELFELDASTGPLFAVVSRLVYQKGLDLTIGVAEHIVNNGGQIAIIGRGEPEEEEAMRELAARFPGRVGVRIGFNETDARRMFAGSDFLLMPSRYEPCGLSQMYAQRFGSLPVARNTGGLADTIEDGVTGFLFNESTVESYTQALDRAFQVFAHPELLNAMRCRAMAAPFNWHQAVEPYADLYRDLLKKNVSVSSNY.

K21 contacts ADP-alpha-D-glucose.

It belongs to the glycosyltransferase 1 family. Bacterial/plant glycogen synthase subfamily.

The catalysed reaction is [(1-&gt;4)-alpha-D-glucosyl](n) + ADP-alpha-D-glucose = [(1-&gt;4)-alpha-D-glucosyl](n+1) + ADP + H(+). It participates in glycan biosynthesis; glycogen biosynthesis. Functionally, synthesizes alpha-1,4-glucan chains using ADP-glucose. This chain is Glycogen synthase, found in Pseudomonas syringae pv. syringae (strain B728a).